The primary structure comprises 508 residues: tRNA (guanine(37)-N(1))-methyltransferase (508 aa).

The transit peptide at 1 to 53 (MKFNFWKGLWKPKSLTPTLSHRLYRRMYTPQPPLNREMTVLDRSKFTVSLNLA) directs the protein to the mitochondrion. H253 is a binding site for S-adenosyl-L-methionine. Residues 267-284 (RERKQQERAKRENHEKST) are compositionally biased toward basic and acidic residues. A disordered region spans residues 267–291 (RERKQQERAKRENHEKSTETAVEPD). Residues 323-324 (DL), 351-352 (DG), and N402 each bind S-adenosyl-L-methionine.

It belongs to the class I-like SAM-binding methyltransferase superfamily. TRM5/TYW2 family. As to quaternary structure, monomer.

Its subcellular location is the mitochondrion matrix. The protein localises to the nucleus. It is found in the cytoplasm. It carries out the reaction guanosine(37) in tRNA + S-adenosyl-L-methionine = N(1)-methylguanosine(37) in tRNA + S-adenosyl-L-homocysteine + H(+). In terms of biological role, specifically methylates the N1 position of guanosine-37 in various cytoplasmic and mitochondrial tRNAs. Methylation is not dependent on the nature of the nucleoside 5' of the target nucleoside. This is the first step in the biosynthesis of wybutosine (yW), a modified base adjacent to the anticodon of tRNAs and required for accurate decoding. In Yarrowia lipolytica (strain CLIB 122 / E 150) (Yeast), this protein is tRNA (guanine(37)-N(1))-methyltransferase.